The sequence spans 35 residues: Photosystem II reaction center protein Psb30 (35 aa).

Residues 7-27 (LIANFAALALITLAGPAVIFI) traverse the membrane as a helical segment.

The protein belongs to the Psb30/Ycf12 family. As to quaternary structure, PSII is composed of 1 copy each of membrane proteins PsbA, PsbB, PsbC, PsbD, PsbE, PsbF, PsbH, PsbI, PsbJ, PsbK, PsbL, PsbM, PsbT, PsbX, PsbY, PsbZ, Psb30/Ycf12, peripheral proteins of the oxygen-evolving complex and a large number of cofactors. It forms dimeric complexes.

The protein localises to the plastid. It is found in the organellar chromatophore thylakoid membrane. Its function is as follows. A core subunit of photosystem II (PSII), probably helps stabilize the reaction center. This is Photosystem II reaction center protein Psb30 from Paulinella chromatophora.